Here is a 152-residue protein sequence, read N- to C-terminus: FAD synthase (152 aa).

ATP-binding positions include 16 to 17 (TF), 21 to 24 (HPGH), D101, and Y129.

The protein belongs to the archaeal FAD synthase family. Homodimer. Requires a divalent metal cation as cofactor.

It catalyses the reaction FMN + ATP + H(+) = FAD + diphosphate. The protein operates within cofactor biosynthesis; FAD biosynthesis; FAD from FMN: step 1/1. Functionally, catalyzes the transfer of the AMP portion of ATP to flavin mononucleotide (FMN) to produce flavin adenine dinucleotide (FAD) coenzyme. The chain is FAD synthase from Methanocaldococcus vulcanius (strain ATCC 700851 / DSM 12094 / M7) (Methanococcus vulcanius).